The chain runs to 371 residues: MASSDGKPGGVFDHHVQTAVCDSRAKYREGRRPRAVKVYTINLESQYLLIQGVPAVGAMKELVERFALYGAIEQYNALDEYPAEDFTEVYLIKFVKLQSARVAKKKMDEQSFFGGLLHVCYAPEFETVEETRKKLQERKAYITRVTKNQDCYMAKKKPVPEQKGTKDSRQGFHPPMPGFGTAALNTSPESPPENSSSCLPYSCEFPLSCFASKSTCSRGEHVDRVSDSCNSARNHGELSRHRDHSAFSPKLQMNTYKNSVPCSSVQEAIATSQAVGRFMPRTTQLQERKRRRDCDRELGTLLETHTSSNEVLIGPKLPGIPTVDLQDDSLNTTATLIRRKLKEVISSVPKPPEDNIKDVCTSHPGKQRRRI.

The RRM domain occupies 46–124; it reads QYLLIQGVPA…GLLHVCYAPE (79 aa). 2 disordered regions span residues 157–191 and 348–371; these read KPVPEQKGTKDSRQGFHPPMPGFGTAALNTSPESP and VPKPPEDNIKDVCTSHPGKQRRRI. The span at 158 to 170 shows a compositional bias: basic and acidic residues; the sequence is PVPEQKGTKDSRQ.

It belongs to the RBM48 family. As to quaternary structure, component of the minor spliceosome. Within this complex, interacts with ARMC7 and PRPF8/PRP8.

In terms of biological role, as a component of the minor spliceosome, involved in the splicing of U12-type introns in pre-mRNAs. The protein is RNA-binding protein 48 (Rbm48) of Mus musculus (Mouse).